Consider the following 448-residue polypeptide: Nucleoprotein (448 aa).

The segment at 1 to 55 is disordered; the sequence is MSFTPGKQSSSRASSGNRSGNGILKWADQSDQSRNVQTRGRRAQSKQTATSQQPS. Over residues 9–22 the composition is skewed to low complexity; it reads SSSRASSGNRSGNG. 2 stretches are compositionally biased toward polar residues: residues 29-38 and 45-55; these read QSDQSRNVQT and SKQTATSQQPS. An RNA-binding region spans residues 52–194; the sequence is QQPSGGNVVP…GYYIEGSGRS (143 aa). Residues 61–190 enclose the CoV N NTD domain; that stretch reads PYYSWFSGIT…VLPQGYYIEG (130 aa). RNA contacts are provided by Arg106, Arg122, and Arg164. Disordered stretches follow at residues 158–231 and 383–420; these read PADI…VTPD and QDGT…RVQQ. The residue at position 167 (Ser167) is a Phosphoserine; by host. A Phosphothreonine; by host modification is found at Thr174. Ser191 is subject to Phosphoserine; by host. Over residues 193-223 the composition is skewed to low complexity; the sequence is RSAPNSRSTSRASSRASSAGSRSRANSGNRT. Positions 259–384 constitute a CoV N CTD domain; it reads AKEIRQKILN…ENLNAYQQQD (126 aa). The interval 266 to 384 is dimerization; sequence ILNKPRQKRS…ENLNAYQQQD (119 aa). 2 stretches are compositionally biased toward polar residues: residues 383 to 393 and 399 to 409; these read QDGTMNMSPKP and QKNGQGENDNI. Residue Ser390 is modified to Phosphoserine; by host. The residue at position 427 (Thr427) is a Phosphothreonine; by host.

The protein belongs to the betacoronavirus nucleocapsid protein family. Homooligomer. Both monomeric and oligomeric forms interact with RNA. Interacts with protein M. Interacts with NSP3; this interaction serves to tether the genome to the newly translated replicase-transcriptase complex at a very early stage of infection. ADP-ribosylated. The ADP-ribosylation is retained in the virion during infection. Post-translationally, phosphorylated on serine and threonine residues.

The protein resides in the virion. It is found in the host endoplasmic reticulum-Golgi intermediate compartment. The protein localises to the host Golgi apparatus. Its function is as follows. Packages the positive strand viral genome RNA into a helical ribonucleocapsid (RNP) and plays a fundamental role during virion assembly through its interactions with the viral genome and membrane protein M. Plays an important role in enhancing the efficiency of subgenomic viral RNA transcription as well as viral replication. The chain is Nucleoprotein from Bovine coronavirus (strain 98TXSF-110-LUN) (BCoV-LUN).